A 347-amino-acid chain; its full sequence is Circulating cathodic antigen (347 aa).

Positions 76 to 109 form a coiled coil; it reads ICLAAENKQLEQLKIENKTLRNSLDEHQTALDMI. The interval 149-177 is disordered; the sequence is PGPKSVNTPSTNSIDSQSVSQKSNSGKVD. The span at 153–174 shows a compositional bias: polar residues; that stretch reads SVNTPSTNSIDSQSVSQKSNSG. The stretch at 206 to 233 forms a coiled coil; sequence DAYATELEEELHRLRSENAGLREILMIS. A disordered region spans residues 303–332; the sequence is LYNIPNPSDDSSNSGTISGNHSDEDSDEDD. Residues 307-316 show a composition bias toward low complexity; the sequence is PNPSDDSSNS.

Belongs to the SIKE family. In terms of processing, O-glycosylated.

Involved in protection of the schistosome gut. The polypeptide is Circulating cathodic antigen (Schistosoma mansoni (Blood fluke)).